We begin with the raw amino-acid sequence, 132 residues long: Proline-rich protein sgp2 (132 aa).

Positions 1–20 are cleaved as a signal peptide; it reads MKYCFVFFVTLICLIANCSA. 2 disordered regions span residues 23 to 62 and 87 to 132; these read EGDK…SNSR and GASV…LGLP. The span at 36 to 47 shows a compositional bias: basic and acidic residues; that stretch reads KQIERASDKTSE. Residues 51–62 show a composition bias toward polar residues; the sequence is GNTNAQGDSNSR. Positions 91–105 are enriched in low complexity; the sequence is PQLPDLPTTPSLPDM.

Its subcellular location is the secreted. The polypeptide is Proline-rich protein sgp2 (sgp2) (Glossina morsitans morsitans (Savannah tsetse fly)).